The sequence spans 191 residues: Small ribosomal subunit protein uS5 (191 aa).

An S5 DRBM domain is found at 20–83 (FADRLVAINR…EQAKRQMIRV (64 aa)). The tract at residues 158–191 (TSPRMVAQRRGKKVSDILKKDGEPAEAAAEPAEA) is disordered. Residues 170-180 (KVSDILKKDGE) are compositionally biased toward basic and acidic residues. A compositionally biased stretch (low complexity) spans 182–191 (AEAAAEPAEA).

The protein belongs to the universal ribosomal protein uS5 family. In terms of assembly, part of the 30S ribosomal subunit. Contacts proteins S4 and S8.

Functionally, with S4 and S12 plays an important role in translational accuracy. In terms of biological role, located at the back of the 30S subunit body where it stabilizes the conformation of the head with respect to the body. The polypeptide is Small ribosomal subunit protein uS5 (Dinoroseobacter shibae (strain DSM 16493 / NCIMB 14021 / DFL 12)).